The chain runs to 217 residues: Nucleoside diphosphate-linked moiety X motif 6 (217 aa).

One can recognise a Nudix hydrolase domain in the interval 42–177 (THQVGVAGAV…VAKLLLYGYN (136 aa)). The Nudix box motif lies at 77 to 98 (GLSDQGEDIGATAVREVLEETG).

The protein belongs to the Nudix hydrolase family. Detected in liver (at protein level).

The protein resides in the cytoplasm. It is found in the nucleus. It localises to the mitochondrion. In terms of biological role, may contribute to the regulation of cell proliferation. The sequence is that of Nucleoside diphosphate-linked moiety X motif 6 (nudt6) from Xenopus laevis (African clawed frog).